The chain runs to 150 residues: Large ribosomal subunit protein bL9 (150 aa).

Belongs to the bacterial ribosomal protein bL9 family.

Its function is as follows. Binds to the 23S rRNA. The protein is Large ribosomal subunit protein bL9 of Aromatoleum aromaticum (strain DSM 19018 / LMG 30748 / EbN1) (Azoarcus sp. (strain EbN1)).